We begin with the raw amino-acid sequence, 393 residues long: Putative N(4)-(beta-N-acetylglucosaminyl)-L-asparaginase GH22932 (393 aa).

The tract at residues 15–41 is disordered; it reads ALKPITNSSSDTITPNPNLITTSRGSS. The span at 19–41 shows a compositional bias: polar residues; that stretch reads ITNSSSDTITPNPNLITTSRGSS. Disulfide bonds link C100–C105 and C199–C215. T246 (nucleophile) is an active-site residue. Substrate is bound by residues 274–277 and 297–300; these read RVGD and TGDG. C357 and C381 form a disulfide bridge.

Belongs to the Ntn-hydrolase family. Heterotetramer of two alpha and two beta chains arranged as a dimer of alpha/beta heterodimers. Post-translationally, cleaved into an alpha and beta chain by autocatalysis; this activates the enzyme. The N-terminal residue of the beta subunit is responsible for the nucleophile hydrolase activity.

It catalyses the reaction N(4)-(beta-N-acetyl-D-glucosaminyl)-L-asparagine + H2O = N-acetyl-beta-D-glucosaminylamine + L-aspartate + H(+). Cleaves the GlcNAc-Asn bond which joins oligosaccharides to the peptide of asparagine-linked glycoproteins. In Drosophila grimshawi (Hawaiian fruit fly), this protein is Putative N(4)-(beta-N-acetylglucosaminyl)-L-asparaginase GH22932.